A 61-amino-acid polypeptide reads, in one-letter code: Large ribosomal subunit protein bL32 (61 aa).

The span at 1–16 (MAVPKRKTSPSRRGMR) shows a compositional bias: basic residues. The disordered stretch occupies residues 1 to 44 (MAVPKRKTSPSRRGMRRSADALKAPTYVEDKDSGELRRPHHIDL). Basic and acidic residues predominate over residues 28–44 (VEDKDSGELRRPHHIDL).

This sequence belongs to the bacterial ribosomal protein bL32 family.

The polypeptide is Large ribosomal subunit protein bL32 (Methylobacterium nodulans (strain LMG 21967 / CNCM I-2342 / ORS 2060)).